The sequence spans 389 residues: Succinate--CoA ligase [ADP-forming] subunit beta (389 aa).

The region spanning 9–236 (KELFAKHEVP…KDATDPLELK (228 aa)) is the ATP-grasp domain. ATP contacts are provided by residues Lys-45, 52–54 (GRG), Ser-94, and Glu-99. 2 residues coordinate Mg(2+): Asn-191 and Asp-205. Substrate contacts are provided by residues Asn-256 and 318-320 (GIT).

The protein belongs to the succinate/malate CoA ligase beta subunit family. Heterotetramer of two alpha and two beta subunits. Mg(2+) serves as cofactor.

The catalysed reaction is succinate + ATP + CoA = succinyl-CoA + ADP + phosphate. The enzyme catalyses GTP + succinate + CoA = succinyl-CoA + GDP + phosphate. The protein operates within carbohydrate metabolism; tricarboxylic acid cycle; succinate from succinyl-CoA (ligase route): step 1/1. Succinyl-CoA synthetase functions in the citric acid cycle (TCA), coupling the hydrolysis of succinyl-CoA to the synthesis of either ATP or GTP and thus represents the only step of substrate-level phosphorylation in the TCA. The beta subunit provides nucleotide specificity of the enzyme and binds the substrate succinate, while the binding sites for coenzyme A and phosphate are found in the alpha subunit. The chain is Succinate--CoA ligase [ADP-forming] subunit beta from Rhodococcus opacus (strain B4).